The sequence spans 344 residues: Ribosomal RNA large subunit methyltransferase Cfr (344 aa).

Glu-90 serves as the catalytic Proton acceptor. The region spanning 97–330 (KQGWESFCIS…ATVRTQFGSE (234 aa)) is the Radical SAM core domain. Cys-104 and Cys-335 are joined by a disulfide. Residues Cys-111, Cys-115, and Cys-118 each coordinate [4Fe-4S] cluster. S-adenosyl-L-methionine-binding positions include 157-158 (GE), Ser-188, 211-213 (SLH), and Asn-292. Cys-335 acts as the S-methylcysteine intermediate in catalysis.

Belongs to the radical SAM superfamily. RlmN family. Cfr subfamily. [4Fe-4S] cluster is required as a cofactor.

It localises to the cytoplasm. It catalyses the reaction adenosine(2503) in 23S rRNA + 2 reduced [2Fe-2S]-[ferredoxin] + 2 S-adenosyl-L-methionine = 8-methyladenosine(2503) in 23S rRNA + 5'-deoxyadenosine + L-methionine + 2 oxidized [2Fe-2S]-[ferredoxin] + S-adenosyl-L-homocysteine. Its function is as follows. Specifically methylates position 8 of adenine 2503 in 23S rRNA. Confers resistance to some classes of antibiotics. The polypeptide is Ribosomal RNA large subunit methyltransferase Cfr (Clostridium botulinum (strain Langeland / NCTC 10281 / Type F)).